A 262-amino-acid polypeptide reads, in one-letter code: uncharacterized protein (262 aa).

The chain crosses the membrane as a helical span at residues 13-35; that stretch reads VVGALLTVVVIVTAAGIIYVISH.

It localises to the membrane. This is an uncharacterized protein from Archaeoglobus fulgidus (strain ATCC 49558 / DSM 4304 / JCM 9628 / NBRC 100126 / VC-16).